A 430-amino-acid chain; its full sequence is Adenylosuccinate synthetase (430 aa).

GTP-binding positions include Gly12–Lys18 and Gly40–Thr42. Asp13 serves as the catalytic Proton acceptor. Positions 13 and 40 each coordinate Mg(2+). IMP-binding positions include Asp13–Lys16, Asn38–His41, Thr130, Arg144, Gln224, Thr239, and Arg303. The active-site Proton donor is the His41. Thr299–Arg305 lines the substrate pocket. GTP-binding positions include Arg305, Lys331–Asp333, and Ser413–Ser415.

This sequence belongs to the adenylosuccinate synthetase family. In terms of assembly, homodimer. Mg(2+) serves as cofactor.

The protein localises to the cytoplasm. The catalysed reaction is IMP + L-aspartate + GTP = N(6)-(1,2-dicarboxyethyl)-AMP + GDP + phosphate + 2 H(+). Its pathway is purine metabolism; AMP biosynthesis via de novo pathway; AMP from IMP: step 1/2. Its function is as follows. Plays an important role in the de novo pathway of purine nucleotide biosynthesis. Catalyzes the first committed step in the biosynthesis of AMP from IMP. The chain is Adenylosuccinate synthetase from Cereibacter sphaeroides (strain KD131 / KCTC 12085) (Rhodobacter sphaeroides).